Reading from the N-terminus, the 46-residue chain is Diuretic hormone (46 aa).

The residue at position 46 (Ile46) is an Isoleucine amide.

The protein belongs to the sauvagine/corticotropin-releasing factor/urotensin I family.

The protein resides in the secreted. Regulation of fluid secretion. Stimulates primary urine secretion by Malpighian tubules and causes a dose-dependent stimulation of cAMP levels in the tubules. The protein is Diuretic hormone of Locusta migratoria (Migratory locust).